Here is a 255-residue protein sequence, read N- to C-terminus: Triosephosphate isomerase (255 aa).

N9 to K11 is a binding site for substrate. The active-site Electrophile is H96. E168 (proton acceptor) is an active-site residue. Positions 174 and 213 each coordinate substrate.

The protein belongs to the triosephosphate isomerase family. Homodimer.

The protein resides in the cytoplasm. It carries out the reaction D-glyceraldehyde 3-phosphate = dihydroxyacetone phosphate. Its pathway is carbohydrate biosynthesis; gluconeogenesis. The protein operates within carbohydrate degradation; glycolysis; D-glyceraldehyde 3-phosphate from glycerone phosphate: step 1/1. Functionally, involved in the gluconeogenesis. Catalyzes stereospecifically the conversion of dihydroxyacetone phosphate (DHAP) to D-glyceraldehyde-3-phosphate (G3P). The protein is Triosephosphate isomerase of Buchnera aphidicola subsp. Acyrthosiphon pisum (strain APS) (Acyrthosiphon pisum symbiotic bacterium).